Consider the following 2443-residue polypeptide: NFX1-type zinc finger-containing protein 1 homolog (2443 aa).

Disordered regions lie at residues proline 212–histidine 339, serine 545–glycine 566, and histidine 583–proline 672. Low complexity predominate over residues isoleucine 246 to proline 263. The segment covering proline 275 to proline 294 has biased composition (pro residues). Positions serine 297–histidine 310 are enriched in polar residues. The segment covering serine 311–serine 322 has biased composition (low complexity). Residues serine 545–valine 564 are compositionally biased toward polar residues. Composition is skewed to basic and acidic residues over residues glycine 601–glutamine 638 and glutamate 662–proline 672. The UvrD-like helicase ATP-binding domain maps to methionine 1040–valine 1545. An ATP-binding site is contributed by glycine 1061–threonine 1068. NF-X1-type zinc fingers lie at residues cysteine 1769 to tyrosine 1791, cysteine 1853 to glutamine 1873, cysteine 1912 to glutamate 1930, and cysteine 2027 to alanine 2044.

This sequence belongs to the ZNFX1 family. Interacts with ego-1, csr-1, wago-1 and prg-1. Interacts with wago-4; the interaction promotes the transmission of epigenetic information across generations. Expressed in germs cells. Not expressed in somatic tissues.

It is found in the cytoplasm. The protein localises to the perinuclear region. Its subcellular location is the cytoplasmic granule. The catalysed reaction is ATP + H2O = ADP + phosphate + H(+). In terms of biological role, epigenetic inheritance factor which, in association with the Argonaute protein wago-4, mediates small RNA-directed transgenerational epigenetic inheritance and thus balances the transgenerational inheritance of epigenetic information. Specifically, maintains a balanced production of small RNAs by preventing the spread of epigenetic signals towards the 5'-end of target mRNAs. Plays a role in small RNA-induced gene silencing in the germline. The polypeptide is NFX1-type zinc finger-containing protein 1 homolog (Caenorhabditis elegans).